The primary structure comprises 661 residues: UvrABC system protein B (661 aa).

The Helicase ATP-binding domain maps to 25–414 (AGLSSKKRSQ…GTVVELIIRP (390 aa)). An ATP-binding site is contributed by 38–45 (GITGSGKT). Positions 91 to 114 (YYDYYQPEAYIARTDTFIEKDSSI) match the Beta-hairpin motif. Residues 430–592 (QVEDLISEIQ…IIPKTINRAI (163 aa)) form the Helicase C-terminal domain. Residues 621-656 (KTHIDKLKKEMLKAASNLEFEQAVKLRDQLKTLEEA) enclose the UVR domain.

The protein belongs to the UvrB family. Forms a heterotetramer with UvrA during the search for lesions. Interacts with UvrC in an incision complex.

It localises to the cytoplasm. The UvrABC repair system catalyzes the recognition and processing of DNA lesions. A damage recognition complex composed of 2 UvrA and 2 UvrB subunits scans DNA for abnormalities. Upon binding of the UvrA(2)B(2) complex to a putative damaged site, the DNA wraps around one UvrB monomer. DNA wrap is dependent on ATP binding by UvrB and probably causes local melting of the DNA helix, facilitating insertion of UvrB beta-hairpin between the DNA strands. Then UvrB probes one DNA strand for the presence of a lesion. If a lesion is found the UvrA subunits dissociate and the UvrB-DNA preincision complex is formed. This complex is subsequently bound by UvrC and the second UvrB is released. If no lesion is found, the DNA wraps around the other UvrB subunit that will check the other stand for damage. In Rickettsia conorii (strain ATCC VR-613 / Malish 7), this protein is UvrABC system protein B.